The sequence spans 281 residues: Oxidoreductase-like protein SRL4 (281 aa).

5 residues coordinate NADP(+): Leu39, Thr60, Lys67, Lys152, and Lys197. The active-site Lowers pKa of active site Tyr is the Lys197.

It belongs to the short-chain dehydrogenases/reductases (SDR) family.

May be involved in the regulation of dNTP production. Induces the SOS system when expressed in E.coli, therefore, it may play a role in DNA metabolism and/or in genome stability. The polypeptide is Oxidoreductase-like protein SRL4 (SRL4) (Saccharomyces cerevisiae (strain ATCC 204508 / S288c) (Baker's yeast)).